The sequence spans 158 residues: UPF0225 protein PSEEN1229 (158 aa).

The protein belongs to the UPF0225 family.

This Pseudomonas entomophila (strain L48) protein is UPF0225 protein PSEEN1229.